Consider the following 117-residue polypeptide: Large ribosomal subunit protein uL18 (117 aa).

The protein belongs to the universal ribosomal protein uL18 family. As to quaternary structure, part of the 50S ribosomal subunit; part of the 5S rRNA/L5/L18/L25 subcomplex. Contacts the 5S and 23S rRNAs.

Functionally, this is one of the proteins that bind and probably mediate the attachment of the 5S RNA into the large ribosomal subunit, where it forms part of the central protuberance. The protein is Large ribosomal subunit protein uL18 of Phytoplasma mali (strain AT).